The sequence spans 101 residues: QTGVRSCNCAGRSFTGTDVTNAIRSARAGGSGNYPHVYNNFEGFSFSCTPTFFEFPVFRGSVYSGGSPGADRVIYDQSGRFCACLTHTGAPSTNGFVECRF.

The residue at position 1 (Gln-1) is a Pyrrolidone carboxylic acid. 3 cysteine pairs are disulfide-bonded: Cys-7/Cys-84, Cys-9/Cys-99, and Cys-48/Cys-82. The active site involves His-36. Glu-54 acts as the Proton acceptor in catalysis. His-87 functions as the Proton donor in the catalytic mechanism.

The protein belongs to the ribonuclease N1/T1 family.

The enzyme catalyses [RNA] containing guanosine + H2O = an [RNA fragment]-3'-guanosine-3'-phosphate + a 5'-hydroxy-ribonucleotide-3'-[RNA fragment].. Inhibited by divalent cations. Inhibition decreases in the order zinc, lead, cadmium, nickel, mercury. The protein is Guanyl-specific ribonuclease Po1 of Pleurotus ostreatus (Oyster mushroom).